The sequence spans 133 residues: Small ribosomal subunit protein uS8 (133 aa).

The protein belongs to the universal ribosomal protein uS8 family. Part of the 30S ribosomal subunit. Contacts proteins S5 and S12.

Functionally, one of the primary rRNA binding proteins, it binds directly to 16S rRNA central domain where it helps coordinate assembly of the platform of the 30S subunit. The polypeptide is Small ribosomal subunit protein uS8 (Mycoplasmoides gallisepticum (strain R(low / passage 15 / clone 2)) (Mycoplasma gallisepticum)).